The sequence spans 85 residues: Hepcidin (85 aa).

A signal peptide spans 1 to 24 (MKTFSVAVAVAVVLAFICLQESSA). The propeptide occupies 25–64 (VPVTEVQELEEPMSNEYQEMPVESWKMPYNNRHKRHSSPG). 4 disulfide bridges follow: Cys-66-Cys-83, Cys-69-Cys-72, Cys-70-Cys-79, and Cys-73-Cys-82.

As to expression, predominantly expressed in liver.

It is found in the secreted. In terms of biological role, seems to act as a signaling molecule involved in the maintenance of iron homeostasis. Seems to be required in conjunction with HFE to regulate both intestinal iron absorption and iron storage in macrophages. Functionally, antimicrobial activity against Gram-negative bacteria such as E.coli. This is Hepcidin (hamp) from Morone chrysops x Morone saxatilis (White bass x Striped bass).